We begin with the raw amino-acid sequence, 277 residues long: Nudix hydrolase 10 (277 aa).

The region spanning 97 to 235 (WIPEAESTIP…KNDLFKDIHH (139 aa)) is the Nudix hydrolase domain. The Nudix box motif lies at 142–163 (GVVDEGEEIFAAAIREVKEETG). E157 and E161 together coordinate Mg(2+).

This sequence belongs to the Nudix hydrolase family. Requires Mg(2+) as cofactor. The cofactor is Mn(2+). Expressed in roots, stems and, at lower level, leaves.

It carries out the reaction ADP-D-ribose + H2O = D-ribose 5-phosphate + AMP + 2 H(+). It catalyses the reaction NAD(+) + H2O = beta-nicotinamide D-ribonucleotide + AMP + 2 H(+). The catalysed reaction is NADH + H2O = reduced beta-nicotinamide D-ribonucleotide + AMP + 2 H(+). May mediate the hydrolysis of some nucleoside diphosphate derivatives. In vitro, uses both ADP-ribose and NADH as substrates; however the relevance of such substrates in vivo is unclear. The sequence is that of Nudix hydrolase 10 (NUDT10) from Arabidopsis thaliana (Mouse-ear cress).